Consider the following 624-residue polypeptide: Elongation factor 4 (624 aa).

In terms of domain architecture, tr-type G spans 17–203 (ALIRNFCIIA…RVVRDVPAPV (187 aa)). GTP contacts are provided by residues 29–34 (DHGKST) and 150–153 (NKID).

It belongs to the TRAFAC class translation factor GTPase superfamily. Classic translation factor GTPase family. LepA subfamily.

It is found in the cell membrane. The enzyme catalyses GTP + H2O = GDP + phosphate + H(+). Required for accurate and efficient protein synthesis under certain stress conditions. May act as a fidelity factor of the translation reaction, by catalyzing a one-codon backward translocation of tRNAs on improperly translocated ribosomes. Back-translocation proceeds from a post-translocation (POST) complex to a pre-translocation (PRE) complex, thus giving elongation factor G a second chance to translocate the tRNAs correctly. Binds to ribosomes in a GTP-dependent manner. This Streptomyces griseus subsp. griseus (strain JCM 4626 / CBS 651.72 / NBRC 13350 / KCC S-0626 / ISP 5235) protein is Elongation factor 4.